The following is a 185-amino-acid chain: Sulfopyruvate decarboxylase subunit beta (185 aa).

Belongs to the TPP enzyme family. Heterododecamer composed of 6 subunits alpha and 6 subunits beta. Requires thiamine diphosphate as cofactor.

It catalyses the reaction 3-sulfopyruvate + H(+) = sulfoacetaldehyde + CO2. Its pathway is cofactor biosynthesis; coenzyme M biosynthesis; sulfoacetaldehyde from phosphoenolpyruvate and sulfite: step 4/4. Involved in the biosynthesis of the coenzyme M (2-mercaptoethanesulfonic acid). Catalyzes the decarboxylation of sulfopyruvate to sulfoacetaldehyde. The protein is Sulfopyruvate decarboxylase subunit beta of Methanococcus maripaludis (strain DSM 14266 / JCM 13030 / NBRC 101832 / S2 / LL).